We begin with the raw amino-acid sequence, 386 residues long: Succinate--CoA ligase [ADP-forming] subunit beta (386 aa).

The ATP-grasp domain occupies 9 to 244; that stretch reads KELLKQFGVP…LDEEDPAEIE (236 aa). ATP is bound by residues lysine 46, 53 to 55, glutamate 99, alanine 102, and glutamate 107; that span reads GRG. Mg(2+)-binding residues include asparagine 199 and aspartate 213. Substrate contacts are provided by residues asparagine 264 and 321–323; that span reads GIM.

This sequence belongs to the succinate/malate CoA ligase beta subunit family. As to quaternary structure, heterotetramer of two alpha and two beta subunits. It depends on Mg(2+) as a cofactor.

It catalyses the reaction succinate + ATP + CoA = succinyl-CoA + ADP + phosphate. The enzyme catalyses GTP + succinate + CoA = succinyl-CoA + GDP + phosphate. It functions in the pathway carbohydrate metabolism; tricarboxylic acid cycle; succinate from succinyl-CoA (ligase route): step 1/1. Its function is as follows. Succinyl-CoA synthetase functions in the citric acid cycle (TCA), coupling the hydrolysis of succinyl-CoA to the synthesis of either ATP or GTP and thus represents the only step of substrate-level phosphorylation in the TCA. The beta subunit provides nucleotide specificity of the enzyme and binds the substrate succinate, while the binding sites for coenzyme A and phosphate are found in the alpha subunit. The sequence is that of Succinate--CoA ligase [ADP-forming] subunit beta from Bordetella petrii (strain ATCC BAA-461 / DSM 12804 / CCUG 43448).